The chain runs to 448 residues: Integrator complex subunit 15 (448 aa).

Belongs to the Integrator subunit 15 family. In terms of assembly, component of the Integrator complex, composed of core subunits INTS1, INTS2, INTS3, INTS4, INTS5, INTS6, INTS7, INTS8, INTS9/RC74, INTS10, INTS11/CPSF3L, INTS12, INTS13, INTS14 and INTS15. The core complex associates with protein phosphatase 2A subunits PPP2CA and PPP2R1A, to form the Integrator-PP2A (INTAC) complex. INTS15 is part of the tail subcomplex, composed of INTS10, INTS13, INTS14 and INTS15.

Its subcellular location is the nucleus. It is found in the chromosome. Component of the integrator complex, a multiprotein complex that terminates RNA polymerase II (Pol II) transcription in the promoter-proximal region of genes. The integrator complex provides a quality checkpoint during transcription elongation by driving premature transcription termination of transcripts that are unfavorably configured for transcriptional elongation: the complex terminates transcription by (1) catalyzing dephosphorylation of the C-terminal domain (CTD) of Pol II subunit POLR2A/RPB1 and SUPT5H/SPT5, (2) degrading the exiting nascent RNA transcript via endonuclease activity and (3) promoting the release of Pol II from bound DNA. The integrator complex is also involved in terminating the synthesis of non-coding Pol II transcripts, such as enhancer RNAs (eRNAs), small nuclear RNAs (snRNAs), telomerase RNAs and long non-coding RNAs (lncRNAs). INTS15 is part of the integrator tail module that acts as a platform for the recruitment of transcription factors at promoters. Within the integrator complex, INTS15 is required to bridge different integrator modules. The chain is Integrator complex subunit 15 from Mus musculus (Mouse).